A 391-amino-acid chain; its full sequence is tRNA(Met) cytidine acetate ligase (391 aa).

Residues 7-20 (IAEY…HIYQ), glycine 101, asparagine 153, and arginine 178 contribute to the ATP site.

It belongs to the TmcAL family.

The protein resides in the cytoplasm. It carries out the reaction cytidine(34) in elongator tRNA(Met) + acetate + ATP = N(4)-acetylcytidine(34) in elongator tRNA(Met) + AMP + diphosphate. In terms of biological role, catalyzes the formation of N(4)-acetylcytidine (ac(4)C) at the wobble position of elongator tRNA(Met), using acetate and ATP as substrates. First activates an acetate ion to form acetyladenylate (Ac-AMP) and then transfers the acetyl group to tRNA to form ac(4)C34. This chain is tRNA(Met) cytidine acetate ligase, found in Latilactobacillus sakei subsp. sakei (strain 23K) (Lactobacillus sakei subsp. sakei).